Consider the following 138-residue polypeptide: Rapid alkalinization factor 23 (138 aa).

Positions 1–28 (MRGLSRNSGAAAIFAILLILAVHNWSVA) are cleaved as a signal peptide. A propeptide spans 29-88 (VSSQSTEFAGDFPPFETECRGTIAECSVSAALGDGGDLFYGGGEMGEEFEMDSEINRRIL) (removed in mature form). 2 disulfide bridges follow: C106-C116 and C129-C135.

It belongs to the plant rapid alkalinization factor (RALF) family. Post-translationally, proteolytically cleaved, probably by SBT6.1 (S1P), a subtilisin-like serine protease (subtilase).

The protein resides in the secreted. Cell signaling peptide that may regulate plant stress, growth, and development. Mediates a rapid alkalinization of extracellular space by mediating a transient increase in the cytoplasmic Ca(2+) concentration leading to a calcium-dependent signaling events through a cell surface receptor and a concomitant activation of some intracellular mitogen-activated protein kinases. Negatively regulates brassinolide (BL)-mediated signaling pathway (e.g. BL-induced hypocotyl elongation and branching limitation). This is Rapid alkalinization factor 23 (RALF23) from Arabidopsis thaliana (Mouse-ear cress).